We begin with the raw amino-acid sequence, 352 residues long: Proton-activated chloride channel (352 aa).

Residues 1–55 (MEAIRKELSRSYQELNEEAEPVAIDPEEAEDEEKEQEEAASAVAPDRDSDRSSPP) form a disordered region. Over 1 to 65 (MEAIRKELSR…VRFSRTCLKN (65 aa)) the chain is Cytoplasmic. Residues 15 to 38 (LNEEAEPVAIDPEEAEDEEKEQEE) are compositionally biased toward acidic residues. Residues 66–86 (FFSVLLILVYLLLMGVAVFLV) traverse the membrane as a helical segment. The Extracellular portion of the chain corresponds to 87–299 (YQTITDFRDK…KDPYIQEIQD (213 aa)). A helical transmembrane segment spans residues 300-320 (IITANPWSMIALLCSVFLVLF). Over 321 to 352 (KAADFAKLSVKWMIKVRRRHLKKRARELNHIS) the chain is Cytoplasmic.

This sequence belongs to the proton-activated chloride channel family.

It is found in the cell membrane. The catalysed reaction is chloride(in) = chloride(out). In terms of biological role, chloride channel gated by pH that facilitates the entry of chloride ions into cells upon exposure to extracellular acidic pH. This is Proton-activated chloride channel from Xenopus tropicalis (Western clawed frog).